The following is a 268-amino-acid chain: Shikimate dehydrogenase (NADP(+)) (268 aa).

Residues 13-15 (SLS) and threonine 60 each bind shikimate. Lysine 64 functions as the Proton acceptor in the catalytic mechanism. Aspartate 76 contributes to the NADP(+) binding site. Shikimate contacts are provided by asparagine 85 and aspartate 100. NADP(+) is bound by residues 124 to 128 (GAGGA), 148 to 153 (NRTMSR), and isoleucine 209. Shikimate is bound at residue tyrosine 211. Residue glycine 232 participates in NADP(+) binding.

This sequence belongs to the shikimate dehydrogenase family. Homodimer.

The catalysed reaction is shikimate + NADP(+) = 3-dehydroshikimate + NADPH + H(+). It participates in metabolic intermediate biosynthesis; chorismate biosynthesis; chorismate from D-erythrose 4-phosphate and phosphoenolpyruvate: step 4/7. Its function is as follows. Involved in the biosynthesis of the chorismate, which leads to the biosynthesis of aromatic amino acids. Catalyzes the reversible NADPH linked reduction of 3-dehydroshikimate (DHSA) to yield shikimate (SA). The chain is Shikimate dehydrogenase (NADP(+)) from Staphylococcus haemolyticus (strain JCSC1435).